The chain runs to 719 residues: Glycine--tRNA ligase beta subunit (719 aa).

Residues 65–84 form a disordered region; that stretch reads PDREEEIKGPPAKAAFKDGK.

It belongs to the class-II aminoacyl-tRNA synthetase family. Tetramer of two alpha and two beta subunits.

It localises to the cytoplasm. The catalysed reaction is tRNA(Gly) + glycine + ATP = glycyl-tRNA(Gly) + AMP + diphosphate. This Trichodesmium erythraeum (strain IMS101) protein is Glycine--tRNA ligase beta subunit.